Here is a 443-residue protein sequence, read N- to C-terminus: Monooxygenase asqM (443 aa).

Belongs to the aromatic-ring hydroxylase family. Requires FAD as cofactor.

It functions in the pathway secondary metabolite biosynthesis. The protein operates within alkaloid biosynthesis. It participates in mycotoxin biosynthesis. Monooxygenase; part of the gene cluster that mediates the biosynthesis of the aspoquinolone mycotoxins. The role of asqM within the aspoquinolone pathway has still to be determined. The first step of the pathway is catalyzed by the nonribosomal peptide synthetase asqK that condenses anthranilic acid and O-methyl-L-tyrosine to produce 4'-methoxycyclopeptin. 4'-methoxycyclopeptin is then converted to 4'-methoxydehydrocyclopeptin by the ketoglutarate-dependent dioxygenase asqJ. AsqJ also converts its first product 4'-methoxydehydrocyclopeptin to 4'-methoxycyclopenin. The following conversion of 4'-methoxycyclopenin into 4'-methoxyviridicatin is catalyzed by the cyclopenase asqI. 4'-methoxyviridicatin is the precursor of quinolone natural products, and is further converted to quinolinone B. The prenyltransferase asqH1 then catalyzes the canonical Friedel-Crafts alkylation of quinolinone B with dimethylallyl cation to yield dimethylallyl quinolone, which is subjected to FAD-dependent dehydrogenation by the FAD-linked oxidoreductase asqF to yield conjugated aryl diene. The delta(3') double bond then serves as the site of the second alkylation with DMAPP catalyzed by the prenyltransferase asqH2 to yield a carbenium ion intermediate, which can be attacked by H(2)O to yield a styrenyl quinolone containing a C3'-hydroxyprenyl chain. The FAD-dependent monooxygenase asqG performs epoxidation of the terminal C7'-C8' olefin. Finally, after dehydratation of the epoxide at C3 by asqC, the quinolone epoxide rearrangement protein asqO catalyzes an enzymatic 3-exo-tet cyclization to yield the cyclopropyl-THF ring system in aspoquinolone. In Emericella nidulans (strain FGSC A4 / ATCC 38163 / CBS 112.46 / NRRL 194 / M139) (Aspergillus nidulans), this protein is Monooxygenase asqM.